The chain runs to 349 residues: GDSL esterase/lipase At2g19050 (349 aa).

The signal sequence occupies residues Met-1–Ala-23. The active-site Nucleophile is Ser-38. N-linked (GlcNAc...) asparagine glycosylation is present at Asn-49. Residues Asp-316 and His-319 contribute to the active site.

Belongs to the 'GDSL' lipolytic enzyme family.

It localises to the secreted. In Arabidopsis thaliana (Mouse-ear cress), this protein is GDSL esterase/lipase At2g19050.